The sequence spans 694 residues: Elongation factor G (694 aa).

One can recognise a tr-type G domain in the interval 8–284; that stretch reads EKLRNIGIVA…AVIDFLPSPV (277 aa). Residues 17-24, 81-85, and 135-138 contribute to the GTP site; these read AHIDAGKT, DTPGH, and NKMD.

This sequence belongs to the TRAFAC class translation factor GTPase superfamily. Classic translation factor GTPase family. EF-G/EF-2 subfamily.

The protein localises to the cytoplasm. Catalyzes the GTP-dependent ribosomal translocation step during translation elongation. During this step, the ribosome changes from the pre-translocational (PRE) to the post-translocational (POST) state as the newly formed A-site-bound peptidyl-tRNA and P-site-bound deacylated tRNA move to the P and E sites, respectively. Catalyzes the coordinated movement of the two tRNA molecules, the mRNA and conformational changes in the ribosome. In Persephonella marina (strain DSM 14350 / EX-H1), this protein is Elongation factor G.